Here is a 620-residue protein sequence, read N- to C-terminus: Glutathione-regulated potassium-efflux system protein KefC (620 aa).

12 consecutive transmembrane segments (helical) span residues 4–24 (HTLL…PIAV), 26–46 (LGLG…PWGL), 54–74 (SILH…GLEL), 90–110 (GALQ…FLGL), 114–134 (VAEL…MQAM), 149–169 (FAVL…IPLL), 178–198 (LGAF…VVVL), 218–238 (VFSA…EEVG), 270–290 (GLLL…GTLV), 294–314 (LRIL…LWLV), 327–347 (WFAV…GAAQ), and 359–379 (ALTL…VLLT). An RCK N-terminal domain is found at 399–518 (QPRVIVAGFG…AGVAMPERET (120 aa)). A disordered region spans residues 599 to 620 (QGTAEGKHSGEVADEPEVKPSI).

The protein belongs to the monovalent cation:proton antiporter 2 (CPA2) transporter (TC 2.A.37) family. KefC subfamily. Homodimer. Interacts with the regulatory subunit KefF.

Its subcellular location is the cell inner membrane. Pore-forming subunit of a potassium efflux system that confers protection against electrophiles. Catalyzes K(+)/H(+) antiport. The chain is Glutathione-regulated potassium-efflux system protein KefC from Salmonella paratyphi B (strain ATCC BAA-1250 / SPB7).